The following is a 353-amino-acid chain: S-adenosylmethionine:tRNA ribosyltransferase-isomerase (353 aa).

The protein belongs to the QueA family. As to quaternary structure, monomer.

Its subcellular location is the cytoplasm. The enzyme catalyses 7-aminomethyl-7-carbaguanosine(34) in tRNA + S-adenosyl-L-methionine = epoxyqueuosine(34) in tRNA + adenine + L-methionine + 2 H(+). It functions in the pathway tRNA modification; tRNA-queuosine biosynthesis. Transfers and isomerizes the ribose moiety from AdoMet to the 7-aminomethyl group of 7-deazaguanine (preQ1-tRNA) to give epoxyqueuosine (oQ-tRNA). This is S-adenosylmethionine:tRNA ribosyltransferase-isomerase from Nitrosomonas europaea (strain ATCC 19718 / CIP 103999 / KCTC 2705 / NBRC 14298).